Consider the following 810-residue polypeptide: MVTNKMTAAFRNPSGKQVATDKVAEKLSSTLSWVKNTVSHTVSQMASQVASPSTSLHTTSSSTTLSTPALSPSSPSQLSPDDLELLAKLEEQNRLLETDSKSLRSVNGSRRNSGSSLVSSSSASSNLSHLEEDSWILWGRIVNEWEDVRKKKEKQVKELVHKGIPHHFRAIVWQLLCSAQSMPIKDQYSELLKMTSPCEKLIRRDIARTYPEHNFFKEKDSLGQEVLFNVMKAYSLVDREVGYCQGSAFIVGLLLMQMPEEEAFCVFVKLMQDYRLRELFKPSMAELGLCMYQFECMIQEHLPELFVHFQSQSFHTSMYASSWFLTIFLTTFPLPIATRIFDIFMSEGLEIVFRVGLALLQMNQAELMQLDMEGMLQHFQKVIPHQFDGVPDKLIQAAYQVKYNSKKMKKLEKEYTTIKTKEMEEQVEIKRLRTENRLLKQRIETLEKHKCSSNYNEDFVLQLEKELVQARLSEAESQCALKEMQDKVLDIEKRNNSLPDENNIARLQEELIAVKLREAEAIMGLKELRQQVKDLEEHWQRHLARTTGRWKDPPKKNAMNELQDELMTIRLREAETQAEIREIKQRMMEMETQNQINSNHLRRAEQEVISLQEKVQYLSAQNKGLLTQLSEAKRKQAEIECKNKEEVMAVRLREADSIAAVAELRQHIAELEIQKEEGKLQGQLNKSDSNQYIGELKDQIAELNHELRCLKGQRGFSGQPPFDGIHIVNHLIGDDESFHSSDEDFIDNSLQETGVGFPLHGKSGSMSLDPAVADGSESETEDSVLETRESNQVVQKERPPRRRESYSTTV.

The interval 1-483 (MVTNKMTAAF…EAESQCALKE (483 aa)) is interaction with alpha-tubulin, gamma-tubulin, BIRC5 and FBXO5. Disordered stretches follow at residues 49–80 (VASPSTSLHTTSSSTTLSTPALSPSSPSQLSP) and 98–123 (TDSKSLRSVNGSRRNSGSSLVSSSSA). Residues 51–80 (SPSTSLHTTSSSTTLSTPALSPSSPSQLSP) show a composition bias toward low complexity. Ser102 and Ser113 each carry phosphoserine. The span at 103–123 (LRSVNGSRRNSGSSLVSSSSA) shows a compositional bias: low complexity. The interval 128-693 (SHLEEDSWIL…LNKSDSNQYI (566 aa)) is dimerization. The Rab-GAP TBC domain maps to 163–348 (GIPHHFRAIV…RIFDIFMSEG (186 aa)). Positions 377–810 (QHFQKVIPHQ…RRRESYSTTV (434 aa)) are targeting to the centrosomes. The stretch at 406–716 (KKMKKLEKEY…LRCLKGQRGF (311 aa)) forms a coiled coil. Residues 487-810 (KVLDIEKRNN…RRRESYSTTV (324 aa)) form an interaction with AURKB and INCENP region. Ser497, Ser689, Ser776, and Ser778 each carry phosphoserine. A disordered region spans residues 756–810 (GFPLHGKSGSMSLDPAVADGSESETEDSVLETRESNQVVQKERPPRRRESYSTTV). The segment covering 785 to 810 (LETRESNQVVQKERPPRRRESYSTTV) has biased composition (basic and acidic residues).

Dimeric and monomeric. Interacts with alpha- and gamma-tubulin. Interacts with FBXO5. Interacts with the chromosome passenger complex (CPC) which is at least composed of AURKB/aurora-B, BIRC5/survivin, CDCA8/borealin and INCENP. Probably phosphorylated by PLK1; may be required for degradation during mitosis. Post-translationally, ubiquitinated. Degradation during prophase is ubiquitin-dependent. Expressed in various cell lines (at protein level). Expressed in a wide range of tissues including brain and adrenal.

It is found in the nucleus. The protein localises to the cytoplasm. Its subcellular location is the cytoskeleton. The protein resides in the microtubule organizing center. It localises to the centrosome. It is found in the spindle. Its function is as follows. Functions as a regulator of cell cycle progression by stabilizing the FBXO5 protein and promoting cyclin-A accumulation during interphase. May play a role in cytokinesis. The sequence is that of Ecotropic viral integration site 5 protein homolog (EVI5) from Homo sapiens (Human).